We begin with the raw amino-acid sequence, 744 residues long: Photosystem I P700 chlorophyll a apoprotein A2 (744 aa).

8 helical membrane passes run 48–71 (LFAT…FHIA), 137–160 (LYAG…LHLQ), 177–201 (LNHH…HVAI), 275–293 (MAHH…GHMY), 337–360 (LHFQ…QHMY), 376–402 (AALY…IFLV), 424–446 (AIIS…LYVH), and 527–545 (FLVH…LILV). [4Fe-4S] cluster contacts are provided by Cys-569 and Cys-578. 2 helical membrane passes run 585 to 606 (AFYL…YWHW) and 653 to 675 (LAVW…MFLI). Chlorophyll a is bound by residues His-664, Met-672, and Tyr-680. Trp-681 contributes to the phylloquinone binding site. A helical transmembrane segment spans residues 717-737 (LVGLAHFTVGYVLTYAAFVIA).

The protein belongs to the PsaA/PsaB family. The PsaA/B heterodimer binds the P700 chlorophyll special pair and subsequent electron acceptors. PSI consists of a core antenna complex that captures photons, and an electron transfer chain that converts photonic excitation into a charge separation. The cyanobacterial PSI reaction center is composed of one copy each of PsaA,B,C,D,E,F,I,J,K,L,M and X, and forms trimeric complexes. The cofactor is PSI electron transfer chain: 5 chlorophyll a, 1 chlorophyll a', 2 phylloquinones and 3 4Fe-4S clusters. PSI core antenna: 90 chlorophyll a, 22 carotenoids, 3 phospholipids and 1 galactolipid. P700 is a chlorophyll a/chlorophyll a' dimer, A0 is one or more chlorophyll a, A1 is one or both phylloquinones and FX is a shared 4Fe-4S iron-sulfur center..

The protein localises to the cellular thylakoid membrane. The catalysed reaction is reduced [plastocyanin] + hnu + oxidized [2Fe-2S]-[ferredoxin] = oxidized [plastocyanin] + reduced [2Fe-2S]-[ferredoxin]. PsaA and PsaB bind P700, the primary electron donor of photosystem I (PSI), as well as the electron acceptors A0, A1 and FX. PSI is a plastocyanin/cytochrome c6-ferredoxin oxidoreductase, converting photonic excitation into a charge separation, which transfers an electron from the donor P700 chlorophyll pair to the spectroscopically characterized acceptors A0, A1, FX, FA and FB in turn. Oxidized P700 is reduced on the lumenal side of the thylakoid membrane by plastocyanin or cytochrome c6. In Synechococcus sp. (strain JA-2-3B'a(2-13)) (Cyanobacteria bacterium Yellowstone B-Prime), this protein is Photosystem I P700 chlorophyll a apoprotein A2.